The sequence spans 1088 residues: Leucine-rich repeat receptor-like protein kinase PEPR2 (1088 aa).

Positions 1–26 (MRNLGLLEITLLCSLFVYFRIDSVSS) are cleaved as a signal peptide. Residues 27 to 739 (LNSDGLALLS…QVKLSTWKIA (713 aa)) lie on the Extracellular side of the membrane. N-linked (GlcNAc...) asparagine glycans are attached at residues N55, N82, and N122. LRR repeat units lie at residues 75–99 (GNVVETLNLSASGLSGQLGSEIGEL), 100–122 (KSLVTLDLSLNSFSGLLPSTLGN), 123–146 (CTSLEYLDLSNNDFSGEVPDIFGS), 147–170 (LQNLTFLYLDRNNLSGLIPASVGG), 172–194 (IELVDLRMSYNNLSGTIPELLGN), 195–219 (CSKLEYLALNNNKLNGSLPASLYLL), 221–243 (NLGELFVSNNSLGGRLHFGSSNC), 244–267 (KKLVSLDLSFNDFQGGVPPEIGNC), 269–291 (SLHSLVMVKCNLTGTIPSSMGML), 292–315 (RKVSVIDLSDNRLSGNIPQELGNC), 316–339 (SSLETLKLNDNQLQGEIPPALSKL), 341–363 (KLQSLELFFNKLSGEIPIGIWKI), 365–387 (SLTQMLVYNNTLTGELPVEVTQL), 388–411 (KHLKKLTLFNNGFYGDIPMSLGLN), 412–435 (RSLEEVDLLGNRFTGEIPPHLCHG), 436–459 (QKLRLFILGSNQLHGKIPASIRQC), 460–485 (KTLERVRLEDNKLSGVLPEFPESLSL), 487–506 (YVNLGSNSFEGSIPRSLGSC), 507–529 (KNLLTIDLSQNKLTGLIPPELGN), 530–554 (LQSLGLLNLSHNYLEGPLPSQLSGC), 556–577 (RLLYFDVGSNSLNGSIPSSFRS), 578–602 (WKSLSTLVLSDNNFLGAIPQFLAEL), 603–627 (DRLSDLRIARNAFGGKIPSSVGLLK), 629–651 (LRYGLDLSANVFTGEIPTTLGAL), 652–676 (INLERLNISNNKLTGPLSVLQSLKS), and 678–698 (NQVDVSYNQFTGPIPVNLLSN). Residues N149, N159, N183, N194, N209, N229, N266, N279, and N314 are each glycosylated (N-linked (GlcNAc...) asparagine). 2 N-linked (GlcNAc...) asparagine glycosylation sites follow: N373 and N411. 2 N-linked (GlcNAc...) asparagine glycosylation sites follow: N537 and N568. N-linked (GlcNAc...) asparagine glycans are attached at residues N658 and N698. The chain crosses the membrane as a helical span at residues 740–760 (LIAAGSSLSVLALLFALFLVL). The Cytoplasmic segment spans residues 761 to 1088 (CRCKRGTKTE…FVRSTSGSVH (328 aa)). Position 791 is a phosphothreonine (T791). One can recognise a Protein kinase domain in the interval 794-1080 (LDDKYIIGRG…KDLTDLESFV (287 aa)). Residues 800-808 (IGRGAHGVV) and K822 contribute to the ATP site. Phosphotyrosine is present on residues Y868 and Y908. Residue D921 is the Proton acceptor of the active site. 2 positions are modified to phosphotyrosine: Y962 and Y969.

It belongs to the protein kinase superfamily. Ser/Thr protein kinase family. In terms of assembly, interacts with BAK1. Interacts with CLE14.

Its subcellular location is the cell membrane. It carries out the reaction L-seryl-[protein] + ATP = O-phospho-L-seryl-[protein] + ADP + H(+). The catalysed reaction is L-threonyl-[protein] + ATP = O-phospho-L-threonyl-[protein] + ADP + H(+). In terms of biological role, acts as a receptor for PEP defense peptides. Unlike typical immune receptors, senses an endogenous elicitor that potentiates PAMP-inducible plant responses. This is Leucine-rich repeat receptor-like protein kinase PEPR2 (PEPR2) from Arabidopsis thaliana (Mouse-ear cress).